The sequence spans 378 residues: Queuine tRNA-ribosyltransferase (378 aa).

Aspartate 90 functions as the Proton acceptor in the catalytic mechanism. Substrate contacts are provided by residues 90-94 (DSGGF), aspartate 144, glutamine 188, and glycine 220. The RNA binding stretch occupies residues 251 to 257 (GVGTPED). The Nucleophile role is filled by aspartate 270. Positions 275–279 (TRNAR) are RNA binding; important for wobble base 34 recognition. 4 residues coordinate Zn(2+): cysteine 308, cysteine 310, cysteine 313, and histidine 339.

Belongs to the queuine tRNA-ribosyltransferase family. Homodimer. Within each dimer, one monomer is responsible for RNA recognition and catalysis, while the other monomer binds to the replacement base PreQ1. The cofactor is Zn(2+).

It catalyses the reaction 7-aminomethyl-7-carbaguanine + guanosine(34) in tRNA = 7-aminomethyl-7-carbaguanosine(34) in tRNA + guanine. The protein operates within tRNA modification; tRNA-queuosine biosynthesis. In terms of biological role, catalyzes the base-exchange of a guanine (G) residue with the queuine precursor 7-aminomethyl-7-deazaguanine (PreQ1) at position 34 (anticodon wobble position) in tRNAs with GU(N) anticodons (tRNA-Asp, -Asn, -His and -Tyr). Catalysis occurs through a double-displacement mechanism. The nucleophile active site attacks the C1' of nucleotide 34 to detach the guanine base from the RNA, forming a covalent enzyme-RNA intermediate. The proton acceptor active site deprotonates the incoming PreQ1, allowing a nucleophilic attack on the C1' of the ribose to form the product. After dissociation, two additional enzymatic reactions on the tRNA convert PreQ1 to queuine (Q), resulting in the hypermodified nucleoside queuosine (7-(((4,5-cis-dihydroxy-2-cyclopenten-1-yl)amino)methyl)-7-deazaguanosine). This is Queuine tRNA-ribosyltransferase from Nautilia profundicola (strain ATCC BAA-1463 / DSM 18972 / AmH).